The chain runs to 406 residues: 1-deoxy-D-xylulose 5-phosphate reductoisomerase (406 aa).

7 residues coordinate NADPH: Thr-21, Gly-22, Ser-23, Ile-24, Gly-47, Gln-50, and Asn-127. 1-deoxy-D-xylulose 5-phosphate is bound at residue Lys-128. Glu-129 serves as a coordination point for NADPH. Asp-151 provides a ligand contact to Mn(2+). The 1-deoxy-D-xylulose 5-phosphate site is built by Ser-152, Glu-153, Ser-177, and His-200. Glu-153 lines the Mn(2+) pocket. Position 206 (Gly-206) interacts with NADPH. 1-deoxy-D-xylulose 5-phosphate-binding residues include Ser-213, Asn-218, Lys-219, and Glu-222. Position 222 (Glu-222) interacts with Mn(2+).

This sequence belongs to the DXR family. Mg(2+) serves as cofactor. Mn(2+) is required as a cofactor.

The catalysed reaction is 2-C-methyl-D-erythritol 4-phosphate + NADP(+) = 1-deoxy-D-xylulose 5-phosphate + NADPH + H(+). It participates in isoprenoid biosynthesis; isopentenyl diphosphate biosynthesis via DXP pathway; isopentenyl diphosphate from 1-deoxy-D-xylulose 5-phosphate: step 1/6. Functionally, catalyzes the NADPH-dependent rearrangement and reduction of 1-deoxy-D-xylulose-5-phosphate (DXP) to 2-C-methyl-D-erythritol 4-phosphate (MEP). In Mycobacterium leprae (strain Br4923), this protein is 1-deoxy-D-xylulose 5-phosphate reductoisomerase.